Reading from the N-terminus, the 400-residue chain is D(3) dopamine receptor (400 aa).

Residues 1-32 (MAPLSQLSGHLNYTCGVENSTGASQARPHAYY) are Extracellular-facing. Asn12 and Asn19 each carry an N-linked (GlcNAc...) asparagine glycan. A helical membrane pass occupies residues 33–55 (ALSYCALILAIVFGNGLVCMAVL). Topologically, residues 56–65 (KERALQTTTN) are cytoplasmic. A helical transmembrane segment spans residues 66–88 (YLVVSLAVADLLVATLVMPWVVY). The Extracellular portion of the chain corresponds to 89 to 104 (LEVTGGVWNFSRVCCD). Asn97 carries N-linked (GlcNAc...) asparagine glycosylation. Residues Cys103 and Cys181 are joined by a disulfide bond. Residues 105-126 (VFVTLDVMMCTASILNLCAISI) traverse the membrane as a helical segment. Residues 127–149 (DRYTAVVMPVHYQHGTGQSSCRR) are Cytoplasmic-facing. Residues 150 to 170 (VTLMITAVWVLAFAVSCPLLF) traverse the membrane as a helical segment. At 171-187 (GFNTTGDPTVCSISNPD) the chain is on the extracellular side. The N-linked (GlcNAc...) asparagine glycan is linked to Asn173. The chain crosses the membrane as a helical span at residues 188 to 209 (FVIYSSVVSFYLPFGVTVLVYA). The Cytoplasmic segment spans residues 210–329 (RIYVVLKQRR…VPLREKKATQ (120 aa)). Residues 330–351 (MVAIVLGAFIVCWLPFFLTHVL) traverse the membrane as a helical segment. The Extracellular portion of the chain corresponds to 352-366 (NTHCQTCHVSPELYS). The cysteines at positions 355 and 358 are disulfide-linked. A helical membrane pass occupies residues 367–386 (ATTWLGYVNSALNPVIYTTF). Topologically, residues 387-400 (NIEFRKAFLKILSC) are cytoplasmic.

Belongs to the G-protein coupled receptor 1 family. Interacts with CLIC6. Interacts with GRK4. Interacts with PALM. Interacts with FLNA (via filamin repeat 21); increases PKA-mediated phosphorylation of FLNA. Phosphorylated by GRK4. Post-translationally, palmitoylated.

It localises to the cell membrane. Functionally, dopamine receptor whose activity is mediated by G proteins which inhibit adenylyl cyclase. Promotes cell proliferation. The chain is D(3) dopamine receptor (DRD3) from Chlorocebus aethiops (Green monkey).